The sequence spans 635 residues: Factor of DNA methylation 2 (635 aa).

Residues 289–471 (LDEKKNLHQA…ESMNSVLMTK (183 aa)) adopt a coiled-coil conformation. Positions 350–365 (ELERQKLDEDKRKSDA) are enriched in basic and acidic residues. Residues 350–376 (ELERQKLDEDKRKSDAMNKSLQLASRE) are disordered.

In terms of assembly, forms a complex with IDN2 and FMD1/INDL1. As to expression, highly expressed in flowers and at lower levels in roots, leaves and stems.

In terms of biological role, forms a complex with IDN2 and FDM1/IDNL1 that is required for RNA-directed DNA methylation (RdDM) and that functions at a downstream step of the RdDM pathway. In Arabidopsis thaliana (Mouse-ear cress), this protein is Factor of DNA methylation 2.